The following is a 480-amino-acid chain: DNA repair protein RadA (480 aa).

A C4-type zinc finger spans residues 10–27; sequence CSECRHVSAKWVGRCLEC. 95–102 contributes to the ATP binding site; it reads GDPGVGKS. The RadA KNRFG motif signature appears at 254-258; the sequence is KNRFG. Positions 353-480 are lon-protease-like; the sequence is DIYLSTVGGM…TGHVPLGRGT (128 aa). A disordered region spans residues 459–480; the sequence is GTTLATPPSHSGTGHVPLGRGT. Residues 461–470 are compositionally biased toward polar residues; that stretch reads TLATPPSHSG.

It belongs to the RecA family. RadA subfamily.

Its function is as follows. DNA-dependent ATPase involved in processing of recombination intermediates, plays a role in repairing DNA breaks. Stimulates the branch migration of RecA-mediated strand transfer reactions, allowing the 3' invading strand to extend heteroduplex DNA faster. Binds ssDNA in the presence of ADP but not other nucleotides, has ATPase activity that is stimulated by ssDNA and various branched DNA structures, but inhibited by SSB. Does not have RecA's homology-searching function. This Mycobacterium tuberculosis (strain CDC 1551 / Oshkosh) protein is DNA repair protein RadA.